The following is a 365-amino-acid chain: Chorismate synthase (365 aa).

Arg46 lines the NADP(+) pocket. FMN is bound by residues 123 to 125, 241 to 242, Gly281, 296 to 300, and Arg322; these read RSS, NG, and KPTPS.

The protein belongs to the chorismate synthase family. In terms of assembly, homotetramer. The cofactor is FMNH2.

It carries out the reaction 5-O-(1-carboxyvinyl)-3-phosphoshikimate = chorismate + phosphate. It participates in metabolic intermediate biosynthesis; chorismate biosynthesis; chorismate from D-erythrose 4-phosphate and phosphoenolpyruvate: step 7/7. In terms of biological role, catalyzes the anti-1,4-elimination of the C-3 phosphate and the C-6 proR hydrogen from 5-enolpyruvylshikimate-3-phosphate (EPSP) to yield chorismate, which is the branch point compound that serves as the starting substrate for the three terminal pathways of aromatic amino acid biosynthesis. This reaction introduces a second double bond into the aromatic ring system. The protein is Chorismate synthase of Helicobacter pylori (strain Shi470).